The primary structure comprises 132 residues: Small ribosomal subunit protein uS8 (132 aa).

It belongs to the universal ribosomal protein uS8 family. Part of the 30S ribosomal subunit. Contacts proteins S5 and S12.

Its function is as follows. One of the primary rRNA binding proteins, it binds directly to 16S rRNA central domain where it helps coordinate assembly of the platform of the 30S subunit. The sequence is that of Small ribosomal subunit protein uS8 from Mycolicibacterium gilvum (strain PYR-GCK) (Mycobacterium gilvum (strain PYR-GCK)).